Here is a 341-residue protein sequence, read N- to C-terminus: uncharacterized protein (341 aa).

It belongs to the Gfo/Idh/MocA family.

This is an uncharacterized protein from Bacillus subtilis (strain 168).